The following is a 248-amino-acid chain: Granulin (248 aa).

It belongs to the polyhedrin family.

In terms of biological role, component of the virus occlusion bodies, which are large proteinaceous structures, that protect the virus from the outside environment for extended periods until they are ingested by insect larvae. The sequence is that of Granulin from Trichoplusia ni (Cabbage looper).